The following is a 498-amino-acid chain: L-ornithine N(5)-monooxygenase (498 aa).

Residues E80–H88 and Q99 contribute to the FAD site. Residue K104 coordinates substrate. V165 contributes to the FAD binding site. Residues S251–S254 and R276 contribute to the NADP(+) site. Residues N290 to F293 and N320 contribute to the substrate site. Residue N320–S322 coordinates NADP(+). S463–L465 provides a ligand contact to FAD. S466 lines the substrate pocket.

The protein belongs to the lysine N(6)-hydroxylase/L-ornithine N(5)-oxygenase family. Homotetramer. The cofactor is FAD.

It catalyses the reaction L-ornithine + NADPH + O2 = N(5)-hydroxy-L-ornithine + NADP(+) + H2O. The enzyme catalyses L-ornithine + NADH + O2 = N(5)-hydroxy-L-ornithine + NAD(+) + H2O. It participates in siderophore biosynthesis. In terms of biological role, catalyzes the conversion of L-ornithine to N(5)-hydroxyornithine, the first step in the biosynthesis of all hydroxamate-containing siderophores, such as the secreted triacetylfusarinine C (TAFC) involved in iron uptake and the intracellular iron storage compound desferriferricrocin (DFFC). The sequence is that of L-ornithine N(5)-monooxygenase from Emericella nidulans (strain FGSC A4 / ATCC 38163 / CBS 112.46 / NRRL 194 / M139) (Aspergillus nidulans).